The sequence spans 329 residues: Biotin synthase (329 aa).

The region spanning 48-278 (FVGDKVYLCS…SKKISVCGGR (231 aa)) is the Radical SAM core domain. The [4Fe-4S] cluster site is built by Cys66, Cys70, and Cys73. The [2Fe-2S] cluster site is built by Ser143 and Cys203.

Belongs to the radical SAM superfamily. Biotin synthase family. As to quaternary structure, homodimer. [4Fe-4S] cluster is required as a cofactor. Requires [2Fe-2S] cluster as cofactor.

The catalysed reaction is (4R,5S)-dethiobiotin + (sulfur carrier)-SH + 2 reduced [2Fe-2S]-[ferredoxin] + 2 S-adenosyl-L-methionine = (sulfur carrier)-H + biotin + 2 5'-deoxyadenosine + 2 L-methionine + 2 oxidized [2Fe-2S]-[ferredoxin]. Its pathway is cofactor biosynthesis; biotin biosynthesis; biotin from 7,8-diaminononanoate: step 2/2. Its function is as follows. Catalyzes the conversion of dethiobiotin (DTB) to biotin by the insertion of a sulfur atom into dethiobiotin via a radical-based mechanism. The protein is Biotin synthase of Geotalea uraniireducens (strain Rf4) (Geobacter uraniireducens).